Reading from the N-terminus, the 332-residue chain is NADH-quinone oxidoreductase subunit H (332 aa).

9 helical membrane-spanning segments follow: residues 4 to 24 (FAFF…IFAS), 44 to 64 (IGPD…MIKL), 78 to 98 (FIFA…LAAI), 120 to 140 (VALL…FLGG), 165 to 185 (VGAL…LVDI), 194 to 214 (FSWL…ALFI), 255 to 275 (IAGA…FWII), 279 to 299 (IMMI…RAAF), and 312 to 332 (YLIL…AVLL).

The protein belongs to the complex I subunit 1 family. As to quaternary structure, NDH-1 is composed of 14 different subunits. Subunits NuoA, H, J, K, L, M, N constitute the membrane sector of the complex.

It is found in the cell inner membrane. It carries out the reaction a quinone + NADH + 5 H(+)(in) = a quinol + NAD(+) + 4 H(+)(out). Its function is as follows. NDH-1 shuttles electrons from NADH, via FMN and iron-sulfur (Fe-S) centers, to quinones in the respiratory chain. The immediate electron acceptor for the enzyme in this species is believed to be ubiquinone. Couples the redox reaction to proton translocation (for every two electrons transferred, four hydrogen ions are translocated across the cytoplasmic membrane), and thus conserves the redox energy in a proton gradient. This subunit may bind ubiquinone. The sequence is that of NADH-quinone oxidoreductase subunit H from Campylobacter jejuni subsp. jejuni serotype O:6 (strain 81116 / NCTC 11828).